Consider the following 461-residue polypeptide: Cysteine--tRNA ligase (461 aa).

C28 lines the Zn(2+) pocket. The 'HIGH' region motif lies at I30–H40. Positions 209, 234, and 238 each coordinate Zn(2+). A 'KMSKS' region motif is present at residues K266–S270. Position 269 (K269) interacts with ATP.

The protein belongs to the class-I aminoacyl-tRNA synthetase family. In terms of assembly, monomer. It depends on Zn(2+) as a cofactor.

Its subcellular location is the cytoplasm. The enzyme catalyses tRNA(Cys) + L-cysteine + ATP = L-cysteinyl-tRNA(Cys) + AMP + diphosphate. The polypeptide is Cysteine--tRNA ligase (Yersinia pseudotuberculosis serotype IB (strain PB1/+)).